The following is a 475-amino-acid chain: tRNA-2-methylthio-N(6)-dimethylallyladenosine synthase (475 aa).

The disordered stretch occupies residues 1–20 (MEQNLTTERSETSSSRAGTA). Residues 25-145 (KKVFVKTYGC…LPSVVTRARA (121 aa)) form the MTTase N-terminal domain. Cysteine 34, cysteine 70, cysteine 108, cysteine 186, cysteine 190, and cysteine 193 together coordinate [4Fe-4S] cluster. The Radical SAM core domain occupies 172 to 404 (RSRGVTAFLT…QALLAEQQRA (233 aa)). Residues 407 to 469 (ESLVGTEIDL…GHSLFCEPAG (63 aa)) form the TRAM domain.

Belongs to the methylthiotransferase family. MiaB subfamily. As to quaternary structure, monomer. Requires [4Fe-4S] cluster as cofactor.

It localises to the cytoplasm. It carries out the reaction N(6)-dimethylallyladenosine(37) in tRNA + (sulfur carrier)-SH + AH2 + 2 S-adenosyl-L-methionine = 2-methylsulfanyl-N(6)-dimethylallyladenosine(37) in tRNA + (sulfur carrier)-H + 5'-deoxyadenosine + L-methionine + A + S-adenosyl-L-homocysteine + 2 H(+). Functionally, catalyzes the methylthiolation of N6-(dimethylallyl)adenosine (i(6)A), leading to the formation of 2-methylthio-N6-(dimethylallyl)adenosine (ms(2)i(6)A) at position 37 in tRNAs that read codons beginning with uridine. This is tRNA-2-methylthio-N(6)-dimethylallyladenosine synthase from Chelativorans sp. (strain BNC1).